Here is a 109-residue protein sequence, read N- to C-terminus: Insulin (109 aa).

A signal peptide spans Met1 to Ala24. 3 disulfides stabilise this stretch: Cys31–Cys93, Cys43–Cys106, and Cys92–Cys97. A propeptide spans Glu56–Gln84 (c peptide).

The protein belongs to the insulin family. In terms of assembly, heterodimer of a B chain and an A chain linked by two disulfide bonds.

It localises to the secreted. Its function is as follows. Insulin decreases blood glucose concentration. It increases cell permeability to monosaccharides, amino acids and fatty acids. It accelerates glycolysis, the pentose phosphate cycle, and glycogen synthesis in liver. This chain is Insulin (INS), found in Octodon degus (Degu).